A 230-amino-acid polypeptide reads, in one-letter code: Small ribosomal subunit protein uS7m (230 aa).

The protein belongs to the universal ribosomal protein uS7 family. In terms of assembly, part of the small ribosomal subunit.

It is found in the mitochondrion. One of the primary rRNA binding proteins, it binds directly to 18S rRNA where it nucleates assembly of the head domain of the small subunit. The polypeptide is Small ribosomal subunit protein uS7m (RPS7) (Marchantia polymorpha (Common liverwort)).